Here is a 394-residue protein sequence, read N- to C-terminus: Phosphoglycerate kinase (394 aa).

Residues 21–23, Arg36, 59–62, Arg118, and Arg151 each bind substrate; these read DFN and HLGR. At Ser183 the chain carries Phosphoserine. ATP-binding residues include Lys201 and Gly292. Thr299 is subject to Phosphothreonine. ATP-binding positions include Glu323 and 350–353; that span reads GGDS.

The protein belongs to the phosphoglycerate kinase family. In terms of assembly, monomer.

It is found in the cytoplasm. It catalyses the reaction (2R)-3-phosphoglycerate + ATP = (2R)-3-phospho-glyceroyl phosphate + ADP. The protein operates within carbohydrate degradation; glycolysis; pyruvate from D-glyceraldehyde 3-phosphate: step 2/5. This is Phosphoglycerate kinase from Bacillus thuringiensis (strain Al Hakam).